The following is a 201-amino-acid chain: CASP-like protein 2B2 (201 aa).

Topologically, residues Met1–Arg28 are cytoplasmic. The chain crosses the membrane as a helical span at residues Val29–Val49. Residues Ala50–Lys71 are Extracellular-facing. A helical membrane pass occupies residues Ala72–Val92. The Cytoplasmic segment spans residues Cys93–Pro108. The chain crosses the membrane as a helical span at residues Leu109–Ala129. Topologically, residues Ala130–Ala166 are extracellular. Residues Ser167–Phe187 traverse the membrane as a helical segment. The Cytoplasmic portion of the chain corresponds to Arg188 to Trp201.

The protein belongs to the Casparian strip membrane proteins (CASP) family. Homodimer and heterodimers.

The protein resides in the cell membrane. The chain is CASP-like protein 2B2 from Arabidopsis lyrata subsp. lyrata (Lyre-leaved rock-cress).